We begin with the raw amino-acid sequence, 426 residues long: Enolase (426 aa).

Glutamine 163 provides a ligand contact to (2R)-2-phosphoglycerate. The Proton donor role is filled by glutamate 205. Mg(2+) is bound by residues aspartate 242, glutamate 285, and aspartate 312. Residues lysine 337, arginine 366, serine 367, and lysine 388 each contribute to the (2R)-2-phosphoglycerate site. Lysine 337 acts as the Proton acceptor in catalysis.

Belongs to the enolase family. The cofactor is Mg(2+).

The protein resides in the cytoplasm. It is found in the secreted. Its subcellular location is the cell surface. It carries out the reaction (2R)-2-phosphoglycerate = phosphoenolpyruvate + H2O. It participates in carbohydrate degradation; glycolysis; pyruvate from D-glyceraldehyde 3-phosphate: step 4/5. Its function is as follows. Catalyzes the reversible conversion of 2-phosphoglycerate (2-PG) into phosphoenolpyruvate (PEP). It is essential for the degradation of carbohydrates via glycolysis. The chain is Enolase from Phenylobacterium zucineum (strain HLK1).